The primary structure comprises 1167 residues: C5a peptidase (1167 aa).

The first 31 residues, 1–31 (MRKKQKLPFDKLAIALMSTSILLNAQSDIKA), serve as a signal peptide directing secretion. Residues 34–52 (VTEDTPVTEQAVETPQPTA) show a composition bias toward polar residues. Residues 34–73 (VTEDTPVTEQAVETPQPTAVSEEVPSSKETKTPQTPDDAE) form a disordered region. The Peptidase S8 domain maps to 99–581 (KATIRDLNDP…AGAVDAKKAS (483 aa)). Residues Asp130, His193, and Ser512 each act as charge relay system in the active site. The disordered stretch occupies residues 1029-1133 (EGHSNKPEQD…RDQLPTTNDK (105 aa)). Tandem repeats lie at residues 1034-1050 (KPEQ…KPEA), 1051-1067 (KPEQ…KPEA), 1068-1084 (KPEQ…KPET), and 1085-1101 (KPEK…TPQK). The segment at 1034 to 1101 (KPEQDGSGQT…GQTPGKTPQK (68 aa)) is 4 X 17 AA tandem repeats. 2 stretches are compositionally biased toward basic and acidic residues: residues 1044–1071 (PDKK…KPEQ) and 1078–1090 (PDKK…EKDS). Polar residues-rich tracts occupy residues 1092–1106 (GQTP…QPSR) and 1120–1130 (KASTRDQLPTT). The short motif at 1127-1131 (LPTTN) is the LPXTG sorting signal element. Thr1130 carries the pentaglycyl murein peptidoglycan amidated threonine modification. The propeptide at 1131-1167 (NDKDTNRLHLLKLVMTTFFFGLVAHIFKTKRQKETKK) is removed by sortase.

It belongs to the peptidase S8 family. Post-translationally, cleaved by SpeB protease; leading to its degradation. Degradation by SpeB is probably strictly regulated to preserve integrity of C5a peptidase.

The protein resides in the secreted. It is found in the cell wall. It carries out the reaction The primary cleavage site is at 67-His-|-Lys-68 in human C5a with a minor secondary cleavage site at 58-Ala-|-Ser-59.. In terms of biological role, this virulence factor of S.pyogenes specifically cleaves the human serum chemotaxin C5a at '68-Lys-|-Asp-69' bond near its C-terminus, destroying its ability to serve as a chemoattractant. This Streptococcus pyogenes protein is C5a peptidase (scpA).